Consider the following 252-residue polypeptide: NAC domain-containing protein 83 (252 aa).

One can recognise an NAC domain in the interval 14 to 160 (LPPGFRFHPT…NWVLCRIFLK (147 aa)). A DNA-binding region spans residues 110–166 (VGLKKTLVFYKGKPPHGSRTDWIMHEYRLSSSPPSSMGPTQNWVLCRIFLKKRAGNK). Disordered regions lie at residues 165 to 194 (NKNDDDDGDSRNLRHNNNNNSSDQIEIITT) and 217 to 252 (LNLLPSSPSSDHASSGVTTEIFSSSDEETSSCNSFR). 2 stretches are compositionally biased toward low complexity: residues 180 to 194 (NNNNNSSDQIEIITT) and 219 to 252 (LLPSSPSSDHASSGVTTEIFSSSDEETSSCNSFR). The segment at 213–226 (RTTDLNLLPSSPSS) is PEST-like.

In terms of assembly, interacts with NAC007/VND4, NAC026/VND5 and NAC030/VND7. Interacts with the mungbean yellow mosaic virus (MYMV) AC1 replication-associated protein. As to expression, expressed in xylem and phloem cells in roots and inflorescence stems. Highly expressed in senescent leaves. Expressed in roots, and abscission and dehiscence tissues, such as axils of bracts and abscission zones in cauline leaves and siliques.

The protein localises to the nucleus. Functionally, transcriptional repressor that negatively regulates the expression of genes involved in xylem vessel formation. Represses the transcriptional activation activity of NAC030/VND7, which regulates protoxylem vessel differentiation by promoting immature xylem vessel-specific genes expression. Transcriptional activator that regulates the COLD-REGULATED (COR15A and COR15B) and RESPONSIVE TO DEHYDRATION (LTI78/RD29A and LTI65/RD29B) genes by binding directly to their promoters. Mediates signaling crosstalk between salt stress response and leaf aging process. May play a role in DNA replication of mungbean yellow mosaic virus. This chain is NAC domain-containing protein 83, found in Arabidopsis thaliana (Mouse-ear cress).